The following is a 223-amino-acid chain: Probable Ras-related protein Rab-4A (223 aa).

A GTP-binding site is contributed by 16–23 (GNAGTGKT). The short motif at 38-46 (TQHTIGAEF) is the Effector region element. Residues 64-68 (DTAGQ) and 122-125 (NKKD) each bind GTP. 2 S-geranylgeranyl cysteine lipidation sites follow: C221 and C223. C223 is modified (cysteine methyl ester).

It belongs to the small GTPase superfamily. Rab family.

Its subcellular location is the cell membrane. Its function is as follows. Protein transport. Probably involved in vesicular traffic. The protein is Probable Ras-related protein Rab-4A of Echinococcus multilocularis (Fox tapeworm).